The sequence spans 361 residues: Phospho-N-acetylmuramoyl-pentapeptide-transferase (361 aa).

Transmembrane regions (helical) follow at residues 27–47 (ILASLTALIVGLLCGPLMIRW), 70–90 (GTPTMGGVLILLAITVSCLLW), 97–117 (SLWLVLLVTLANGLVGWVDDY), 134–154 (YFWQSVIALVAVSYLYWNASL), 167–187 (TVTWDLGVFFPVLAYFVIVGS), 199–219 (GLAIMPIVMVAGALGVFAYAS), 236–256 (TGELTIFCSSIVGAGLGFLWY), 263–283 (VFMGDVGSLALGAALGIVAVV), 288–308 (LVLLIMGGLFVIETLSVILQV), and 338–358 (KVIVRFWIITVVFVLCGLATL).

The protein belongs to the glycosyltransferase 4 family. MraY subfamily. Mg(2+) serves as cofactor.

Its subcellular location is the cell inner membrane. The catalysed reaction is UDP-N-acetyl-alpha-D-muramoyl-L-alanyl-gamma-D-glutamyl-meso-2,6-diaminopimeloyl-D-alanyl-D-alanine + di-trans,octa-cis-undecaprenyl phosphate = di-trans,octa-cis-undecaprenyl diphospho-N-acetyl-alpha-D-muramoyl-L-alanyl-D-glutamyl-meso-2,6-diaminopimeloyl-D-alanyl-D-alanine + UMP. It functions in the pathway cell wall biogenesis; peptidoglycan biosynthesis. Its function is as follows. Catalyzes the initial step of the lipid cycle reactions in the biosynthesis of the cell wall peptidoglycan: transfers peptidoglycan precursor phospho-MurNAc-pentapeptide from UDP-MurNAc-pentapeptide onto the lipid carrier undecaprenyl phosphate, yielding undecaprenyl-pyrophosphoryl-MurNAc-pentapeptide, known as lipid I. In Legionella pneumophila subsp. pneumophila (strain Philadelphia 1 / ATCC 33152 / DSM 7513), this protein is Phospho-N-acetylmuramoyl-pentapeptide-transferase.